The following is a 228-amino-acid chain: uncharacterized protein (228 aa).

Residues 1–23 form the signal peptide; that stretch reads MIRHTRLLLASLCLIATGARASA.

This is an uncharacterized protein from Methylorubrum extorquens (strain ATCC 14718 / DSM 1338 / JCM 2805 / NCIMB 9133 / AM1) (Methylobacterium extorquens).